The following is a 278-amino-acid chain: Prohibitin-7, mitochondrial (278 aa).

The Mitochondrial matrix portion of the chain corresponds to 1-14 (MNVKKVPNVPGSPA). A helical; Signal-anchor for type II membrane protein transmembrane segment spans residues 15 to 37 (LSALLKLGVIGGLGLYCIGSSMY). The Mitochondrial intermembrane segment spans residues 38–278 (NVDGGHRAIV…NSSDLLISKQ (241 aa)). Residues 186–220 (KEFTEAIEKKQVAAQEAERAKFIVEKAEQDKKSAI) adopt a coiled-coil conformation.

Belongs to the prohibitin family. In terms of assembly, component of a prohibitin multimeric complex in mitochondrial membranes.

The protein resides in the mitochondrion inner membrane. Its function is as follows. Prohibitin probably acts as a holdase/unfoldase for the stabilization of newly synthesized mitochondrial proteins. The polypeptide is Prohibitin-7, mitochondrial (PHB7) (Arabidopsis thaliana (Mouse-ear cress)).